The primary structure comprises 265 residues: Hydroxyethylthiazole kinase (265 aa).

Met-50 lines the substrate pocket. Residues Arg-125 and Thr-171 each coordinate ATP. Gly-198 is a binding site for substrate.

Belongs to the Thz kinase family. The cofactor is Mg(2+).

It catalyses the reaction 5-(2-hydroxyethyl)-4-methylthiazole + ATP = 4-methyl-5-(2-phosphooxyethyl)-thiazole + ADP + H(+). Its pathway is cofactor biosynthesis; thiamine diphosphate biosynthesis; 4-methyl-5-(2-phosphoethyl)-thiazole from 5-(2-hydroxyethyl)-4-methylthiazole: step 1/1. Catalyzes the phosphorylation of the hydroxyl group of 4-methyl-5-beta-hydroxyethylthiazole (THZ). This is Hydroxyethylthiazole kinase from Salmonella typhimurium (strain LT2 / SGSC1412 / ATCC 700720).